Consider the following 155-residue polypeptide: Ribosome maturation factor RimP (155 aa).

It belongs to the RimP family.

Its subcellular location is the cytoplasm. Its function is as follows. Required for maturation of 30S ribosomal subunits. This is Ribosome maturation factor RimP from Agathobacter rectalis (strain ATCC 33656 / DSM 3377 / JCM 17463 / KCTC 5835 / VPI 0990) (Eubacterium rectale).